Reading from the N-terminus, the 316-residue chain is Beta-agarase (316 aa).

Positions 1–18 (MKRKLFTICLASLQFACA) are cleaved as a signal peptide. Residues 27–315 (YEWDIYPVPA…WIRVYTLVPE (289 aa)) form the GH16 domain. Substrate-binding positions include W78, 87–97 (QRDHVSVSDGF), and 101–103 (RAS). Residue E167 is the Nucleophile of the active site. E172 functions as the Proton donor in the catalytic mechanism. Residue R197 coordinates substrate.

This sequence belongs to the glycosyl hydrolase 16 family.

The enzyme catalyses Hydrolysis of (1-&gt;4)-beta-D-galactosidic linkages in agarose, giving the tetramer as the predominant product.. Functionally, cleaves the beta-1,4-linkages between beta-D-galactose and alpha-L-3,6-anhydro-galactose residues in agarose. Cleaves agarose in a random manner with retention of the anomeric-bond configuration, producing beta-anomers that give rise progressively to alpha-anomers when mutarotation takes place. In Phocaeicola plebeius (strain DSM 17135 / JCM 12973 / CCUG 54634 / M2) (Bacteroides plebeius), this protein is Beta-agarase.